The primary structure comprises 255 residues: tRNA pseudouridine synthase A (255 aa).

The active-site Nucleophile is aspartate 56. Residue tyrosine 114 participates in substrate binding.

This sequence belongs to the tRNA pseudouridine synthase TruA family. As to quaternary structure, homodimer.

The catalysed reaction is uridine(38/39/40) in tRNA = pseudouridine(38/39/40) in tRNA. Formation of pseudouridine at positions 38, 39 and 40 in the anticodon stem and loop of transfer RNAs. The polypeptide is tRNA pseudouridine synthase A (Methylacidiphilum infernorum (isolate V4) (Methylokorus infernorum (strain V4))).